Here is a 358-residue protein sequence, read N- to C-terminus: 3-isopropylmalate dehydrogenase (358 aa).

77–90 (GEKWDSLPRELRPE) is an NAD(+) binding site. Substrate-binding residues include Arg97, Arg107, Arg135, and Asp220. Residues Asp220, Asp244, and Asp248 each coordinate Mg(2+). 277-289 (GSAPDIAGQGIAN) provides a ligand contact to NAD(+).

This sequence belongs to the isocitrate and isopropylmalate dehydrogenases family. LeuB type 1 subfamily. As to quaternary structure, homodimer. The cofactor is Mg(2+). It depends on Mn(2+) as a cofactor.

The protein localises to the cytoplasm. The catalysed reaction is (2R,3S)-3-isopropylmalate + NAD(+) = 4-methyl-2-oxopentanoate + CO2 + NADH. It functions in the pathway amino-acid biosynthesis; L-leucine biosynthesis; L-leucine from 3-methyl-2-oxobutanoate: step 3/4. In terms of biological role, catalyzes the oxidation of 3-carboxy-2-hydroxy-4-methylpentanoate (3-isopropylmalate) to 3-carboxy-4-methyl-2-oxopentanoate. The product decarboxylates to 4-methyl-2 oxopentanoate. In Wolinella succinogenes (strain ATCC 29543 / DSM 1740 / CCUG 13145 / JCM 31913 / LMG 7466 / NCTC 11488 / FDC 602W) (Vibrio succinogenes), this protein is 3-isopropylmalate dehydrogenase.